A 193-amino-acid polypeptide reads, in one-letter code: Ion-translocating oxidoreductase complex subunit A (193 aa).

The next 6 helical transmembrane spans lie at 5–25, 39–59, 62–82, 102–122, 134–154, and 171–191; these read ALLF…FLGL, IGMG…SWLV, FILV…LVLA, LLGI…VVLL, TIYG…FAAI, and SIAL…TGLV.

It belongs to the NqrDE/RnfAE family. As to quaternary structure, the complex is composed of six subunits: RnfA, RnfB, RnfC, RnfD, RnfE and RnfG.

It localises to the cell inner membrane. In terms of biological role, part of a membrane-bound complex that couples electron transfer with translocation of ions across the membrane. This chain is Ion-translocating oxidoreductase complex subunit A, found in Pectobacterium carotovorum subsp. carotovorum (strain PC1).